We begin with the raw amino-acid sequence, 966 residues long: Aminopeptidase N (966 aa).

The Cytoplasmic portion of the chain corresponds to 1–8; the sequence is MAKGFYIS. The helical; Signal-anchor for type II membrane protein transmembrane segment at 9-32 threads the bilayer; that stretch reads KSLGILGILLGVAALCTIVALSVV. The interval 33 to 65 is cytosolic Ser/Thr-rich junction; that stretch reads YRQEKNKNTSQSPSMAPLNPTATSSPATTLDQN. Over 33–966 the chain is Extracellular; that stretch reads YRQEKNKNTS…VLAWFTANSA (934 aa). N-linked (GlcNAc...) asparagine glycosylation is found at Asn40 and Asn125. The interval 40–61 is disordered; it reads NTSQSPSMAPLNPTATSSPATT. Residues 66–966 are metalloprotease; that stretch reads LPWNRYRLPK…VLAWFTANSA (901 aa). Sulfotyrosine is present on Tyr173. Asn259 and Asn315 each carry an N-linked (GlcNAc...) asparagine glycan. 348–352 is a substrate binding site; that stretch reads GAMEN. Residue His384 coordinates Zn(2+). Glu385 (proton acceptor) is an active-site residue. Residues His388 and Glu407 each coordinate Zn(2+). Residues Tyr415 and Tyr420 each carry the sulfotyrosine modification. N-linked (GlcNAc...) asparagine glycosylation is found at Asn552, Asn570, Asn624, and Asn734. 2 disulfide bridges follow: Cys760-Cys767 and Cys797-Cys833. N-linked (GlcNAc...) asparagine glycosylation is present at Asn817. A Phosphotyrosine modification is found at Tyr852. At Tyr912 the chain carries Sulfotyrosine.

Belongs to the peptidase M1 family. Homodimer. Interacts with SLC6A19. Zn(2+) serves as cofactor. Post-translationally, sulfated. N- and O-glycosylated. In terms of processing, may undergo proteolysis and give rise to a soluble form.

Its subcellular location is the cell membrane. The catalysed reaction is Release of an N-terminal amino acid, Xaa-|-Yaa- from a peptide, amide or arylamide. Xaa is preferably Ala, but may be most amino acids including Pro (slow action). When a terminal hydrophobic residue is followed by a prolyl residue, the two may be released as an intact Xaa-Pro dipeptide.. In terms of biological role, broad specificity aminopeptidase which plays a role in the final digestion of peptides generated from hydrolysis of proteins by gastric and pancreatic proteases. Also involved in the processing of various peptides including peptide hormones, such as angiotensin III and IV, neuropeptides, and chemokines. May also be involved the cleavage of peptides bound to major histocompatibility complex class II molecules of antigen presenting cells. May have a role in angiogenesis and promote cholesterol crystallization. May have a role in amino acid transport by acting as binding partner of amino acid transporter SLC6A19 and regulating its activity. The protein is Aminopeptidase N (ANPEP) of Oryctolagus cuniculus (Rabbit).